Consider the following 507-residue polypeptide: Lysine--tRNA ligase (507 aa).

Glu416 and Glu423 together coordinate Mg(2+).

This sequence belongs to the class-II aminoacyl-tRNA synthetase family. In terms of assembly, homodimer. Mg(2+) is required as a cofactor.

The protein localises to the cytoplasm. It carries out the reaction tRNA(Lys) + L-lysine + ATP = L-lysyl-tRNA(Lys) + AMP + diphosphate. The chain is Lysine--tRNA ligase from Hahella chejuensis (strain KCTC 2396).